A 1956-amino-acid polypeptide reads, in one-letter code: Probable cation-transporting ATPase 1 (1956 aa).

The Cytoplasmic segment spans residues methionine 1–isoleucine 35. A helical membrane pass occupies residues leucine 36–leucine 58. The Extracellular portion of the chain corresponds to aspartate 59 to tyrosine 61. The helical transmembrane segment at isoleucine 62–leucine 80 threads the bilayer. The Cytoplasmic segment spans residues lysine 81–serine 407. The chain crosses the membrane as a helical span at residues tyrosine 408–tyrosine 427. The Extracellular segment spans residues isoleucine 428 to isoleucine 440. The chain crosses the membrane as a helical span at residues isoleucine 441 to glycine 462. Topologically, residues isoleucine 463–lysine 1818 are cytoplasmic. Residue aspartate 496 is the 4-aspartylphosphate intermediate of the active site. The interval tyrosine 901 to asparagine 938 is disordered. The span at aspartate 907–aspartate 935 shows a compositional bias: acidic residues. The Mg(2+) site is built by aspartate 1760 and aspartate 1764. Residues phenylalanine 1819–isoleucine 1837 form a helical membrane-spanning segment. Residues serine 1838–glutamine 1845 are Extracellular-facing. The chain crosses the membrane as a helical span at residues tyrosine 1846–tryptophan 1863. Residues threonine 1864–serine 1881 lie on the Cytoplasmic side of the membrane. The chain crosses the membrane as a helical span at residues phenylalanine 1882–valine 1905. Residues leucine 1906–tyrosine 1928 lie on the Extracellular side of the membrane. A helical transmembrane segment spans residues leucine 1929–phenylalanine 1952. Residues lysine 1953–glutamate 1956 lie on the Cytoplasmic side of the membrane.

Belongs to the cation transport ATPase (P-type) (TC 3.A.3) family. Type V subfamily.

It is found in the membrane. The enzyme catalyses ATP + H2O = ADP + phosphate + H(+). The sequence is that of Probable cation-transporting ATPase 1 from Plasmodium falciparum.